The following is a 332-amino-acid chain: Ketol-acid reductoisomerase (NADP(+)) (332 aa).

Residues 2-182 (ANIYYDEDAS…GATRAGLIET (181 aa)) form the KARI N-terminal Rossmann domain. Residues 25–28 (YGSQ), S51, S53, and 83–86 (DTVQ) contribute to the NADP(+) site. The active site involves H108. An NADP(+)-binding site is contributed by G134. A KARI C-terminal knotted domain is found at 183–327 (TFKEETETDL…KELRKMMPWL (145 aa)). Mg(2+) is bound by residues D191, E195, E227, and E231. Substrate is bound at residue S252.

Belongs to the ketol-acid reductoisomerase family. Mg(2+) is required as a cofactor.

The catalysed reaction is (2R)-2,3-dihydroxy-3-methylbutanoate + NADP(+) = (2S)-2-acetolactate + NADPH + H(+). It carries out the reaction (2R,3R)-2,3-dihydroxy-3-methylpentanoate + NADP(+) = (S)-2-ethyl-2-hydroxy-3-oxobutanoate + NADPH + H(+). The protein operates within amino-acid biosynthesis; L-isoleucine biosynthesis; L-isoleucine from 2-oxobutanoate: step 2/4. It participates in amino-acid biosynthesis; L-valine biosynthesis; L-valine from pyruvate: step 2/4. Functionally, involved in the biosynthesis of branched-chain amino acids (BCAA). Catalyzes an alkyl-migration followed by a ketol-acid reduction of (S)-2-acetolactate (S2AL) to yield (R)-2,3-dihydroxy-isovalerate. In the isomerase reaction, S2AL is rearranged via a Mg-dependent methyl migration to produce 3-hydroxy-3-methyl-2-ketobutyrate (HMKB). In the reductase reaction, this 2-ketoacid undergoes a metal-dependent reduction by NADPH to yield (R)-2,3-dihydroxy-isovalerate. This is Ketol-acid reductoisomerase (NADP(+)) from Sulfurihydrogenibium sp. (strain YO3AOP1).